The primary structure comprises 154 residues: Small ribosomal subunit protein uS7 (154 aa).

It belongs to the universal ribosomal protein uS7 family. In terms of assembly, part of the 30S ribosomal subunit. Contacts proteins S9 and S11.

Functionally, one of the primary rRNA binding proteins, it binds directly to 16S rRNA where it nucleates assembly of the head domain of the 30S subunit. Is located at the subunit interface close to the decoding center, probably blocks exit of the E-site tRNA. This is Small ribosomal subunit protein uS7 from Karelsulcia muelleri (strain GWSS) (Sulcia muelleri).